Consider the following 245-residue polypeptide: UPF0319 protein VV0984 (245 aa).

Residues 1 to 20 (MRYIGKWMMLGALVSSSVFA) form the signal peptide.

It belongs to the UPF0319 family.

This is UPF0319 protein VV0984 from Vibrio vulnificus (strain YJ016).